Here is a 141-residue protein sequence, read N- to C-terminus: MAKKVANIVKLQIPAGAATPAPPVGPALGQAGINIMGFTKEFNARTADQKGMLIPVVITVYEDRSFDFITKTPPAAVLLKKAAGVEHGSGEPNTNKVASVTKDQVKEIAETKMQDLNAADVEAAMRMIEGTARSMGFTVED.

This sequence belongs to the universal ribosomal protein uL11 family. Part of the ribosomal stalk of the 50S ribosomal subunit. Interacts with L10 and the large rRNA to form the base of the stalk. L10 forms an elongated spine to which L12 dimers bind in a sequential fashion forming a multimeric L10(L12)X complex. In terms of processing, one or more lysine residues are methylated.

Functionally, forms part of the ribosomal stalk which helps the ribosome interact with GTP-bound translation factors. The polypeptide is Large ribosomal subunit protein uL11 (Limosilactobacillus reuteri (strain DSM 20016) (Lactobacillus reuteri)).